The primary structure comprises 85 residues: Antibacterial factor-related peptide 2 (85 aa).

Residues 1–17 (MFVRSLFLALLLATIVA) form the signal peptide. A propeptide spanning residues 82–85 (IKRG) is cleaved from the precursor.

Expressed in the pharynx (at protein level). Detected in pharyngeal neurons and secretory cells.

The protein localises to the secreted. Exhibits antimicrobial activity against the Gram-positive bacteria B.subtilis IFO 3134, K.varians MAFF 118076 and S.aureus ATCC 6538P, the Gram-negative bacteria A.tumefaciens MAFF 1001, B.bacteriovorus MAFF 106101 and K.pneumoniae MAFF 519002, and the yeasts C.krusei MAFF 114085, K.thermotolerans MAFF 113848 and T.delbrueckii MAFF 113811. This is Antibacterial factor-related peptide 2 from Caenorhabditis elegans.